A 706-amino-acid polypeptide reads, in one-letter code: Protein psiG (706 aa).

An N-terminal signal peptide occupies residues 1–23 (MKIILTLLIILFSLNKNLNFVSS). At 24–644 (EVTKSRICSI…FVCKPAAIIS (621 aa)) the chain is on the extracellular side. N-linked (GlcNAc...) asparagine glycosylation is found at Asn-95, Asn-107, Asn-212, Asn-296, Asn-429, Asn-521, Asn-532, and Asn-616. A PA14 domain is found at 109–253 (TLDKSSNIYS…SDYCGVCQGD (145 aa)). The chain crosses the membrane as a helical span at residues 645 to 665 (TSVIVGVSVAAAVVAIAIVVA). Over 666-706 (SKKGYDAWAASNNNSLASLTSNPLYENPTGNGDNPMYQPNS) the chain is Cytoplasmic. The interval 687-706 (NPLYENPTGNGDNPMYQPNS) is disordered. A compositionally biased stretch (polar residues) spans 693–706 (PTGNGDNPMYQPNS).

The protein belongs to the prespore-cell-inducing factor family.

It is found in the membrane. This Dictyostelium discoideum (Social amoeba) protein is Protein psiG (psiG-1).